Consider the following 680-residue polypeptide: MTTFSTCAAFLSLVVVLHAVHVGGAILESQAPHRELKAYRPLQDNNLQEVYASSAAAVHYDPDLKDVNIVATYSDHYGNIRLGRVKMGDLSPSWVLENPAYQVSRKTKGSQLVIPRDSFQNDTGMEDNASHSTTNQTDESENQFPNVDFASPAKLKRQILRQERRGQRTLELIRQEKETDEQMQEAAIQKSMSFENSVIGKYSIWRRDYESPNADAILKLMRDQIIMAKAYANIAKSKNVTNLYVFLMQQCGENKRVIGKATSDADLPSSALDQAKAMGHALSLAKDELYDCHELAKKFRAILQSTERKVDGLKKKGTFLIQLAAKTFPKPLHCLSLQLAADYFILGFNEEDAVKEDVSQKKLEDPSLYHYAIFSDNVLATSVVVNSTVLNAKEPQRHVFHIVTDKLNFGAMKMWFRINAPADATIQVENINDFKWLNSSYCSVLRQLESARLKEYYFKANHPSSISAGADNLKYRNPKYLSMLNHLRFYLPEVYPKLEKILFLDDDIVVQKDLAPLWEIDMQGKVNGAVETCKESFHRFDKYLNFSNPKISENFDAGACGWAFGMNMFDLKEWRKRNITGIYHYWQDLNEDRTLWKLGSLPPGLITFYNLTYAMDRSWHVLGLGYDPALNQTAIENAAVVHYNGNYKPWLGLAFAKYKPYWSKYVEYDNPYLRRCDINE.

Residues 1-6 (MTTFST) are Cytoplasmic-facing. Residues 7 to 27 (CAAFLSLVVVLHAVHVGGAIL) form a helical; Signal-anchor for type II membrane protein membrane-spanning segment. Residues 28–680 (ESQAPHRELK…PYLRRCDINE (653 aa)) lie on the Lumenal side of the membrane. The disordered stretch occupies residues 118–146 (SFQNDTGMEDNASHSTTNQTDESENQFPN). Residues N121, N128, N135, N239, N386, N438, N545, N578, N610, and N631 are each glycosylated (N-linked (GlcNAc...) asparagine). A compositionally biased stretch (polar residues) spans 130-145 (SHSTTNQTDESENQFP).

Belongs to the glycosyltransferase 8 family. In terms of tissue distribution, expressed in roots, inflorescences, siliques, leaves and stems.

The protein localises to the golgi apparatus membrane. The protein operates within glycan metabolism; pectin biosynthesis. May be involved in pectin and/or xylans biosynthesis in cell walls. The chain is Probable galacturonosyltransferase 3 (GAUT3) from Arabidopsis thaliana (Mouse-ear cress).